Consider the following 953-residue polypeptide: MDYKKSLNLPDTPFPMRGDLAKREPGWVAEWEETQVYQAIRAASRGRPRFVLHDGPPYANGDIHIGHAVNKILKDIIVKSRNMAGYDAHYVPGWDCHGMPIEIQIEKKYGKHLPVTEVQSKARAYALEQIDRQRKDFKRLGVLGDWHNPYLTMNFSNEADEIRVLGRILEKGYVFRGLKPVNWCFDCGSALAEAEVEYADRVDPAIDVAFPFTDRGALARAFGLDEVDAGAIVIWTTTPWTIPSNQALNVHPEIDYALVRVTPTPVHGPLLLLAQERVEPSLKAWGLEGEIIATAKGEALEGLRFRHPLAAAAQGYDRTSPIYLGDYVTLDTGTGVVHSAPAYGIEDFVSCKAHGLADSDILGPVMGDGKFVDSLPLFGGLSIWDANPRIVEALKLAGSLMLVQKLSHSYMHCWRHKTPVIYRATSQWFAGMDVKPRDGGPSLRESALAGIDATAFYPAWGRARLHAMIANRPDWTLSRQRQWGVPMAFFVHKETGELHPRTVELLEQVAQRVEKGGIEAWQSLDPRELLGDEAELYEKNRDTLDVWFDSGSTHATVLGGKDGVLGGSHGAELAWPADLYLEGSDQHRGWFHSSLLTGCMLYGHPPYKGLLTHGFVVDGQGRKMSKSVGNVIAPQKVSDSLGAEILRLWVASTDYSGELSISDEILKRVVESYRRIRNTLRFLLANVADFDAVGQAVPYGELFEIDRYALAMTAQMQAEVQGHYERYDFHPAVSRLQTFCSEDLGAFYLDILKDRLYTTAAGSAARRSAQTALLDITQTLLKLMAPILSFTAEEAWKVLAGSALAKQADAPRVTIFTEVYHALPPFADGEALTAKWTRLRAIRAEVQRKLEEVRSAGAIGSSLQAEVDLYANAADHDILASLGDDLRFVLIVSRATVHADADDLRIEIAASGHKKCERCWHWRPDVGQDADHPEICGRCVSNLFGAGEPRTRA.

The 'HIGH' region motif lies at Pro57–His67. Residue Glu582 coordinates L-isoleucyl-5'-AMP. The 'KMSKS' region signature appears at Lys623–Ser627. Residue Lys626 coordinates ATP. Zn(2+) is bound by residues Cys916, Cys919, Cys936, and Cys939.

It belongs to the class-I aminoacyl-tRNA synthetase family. IleS type 1 subfamily. Monomer. Requires Zn(2+) as cofactor.

It localises to the cytoplasm. It carries out the reaction tRNA(Ile) + L-isoleucine + ATP = L-isoleucyl-tRNA(Ile) + AMP + diphosphate. Functionally, catalyzes the attachment of isoleucine to tRNA(Ile). As IleRS can inadvertently accommodate and process structurally similar amino acids such as valine, to avoid such errors it has two additional distinct tRNA(Ile)-dependent editing activities. One activity is designated as 'pretransfer' editing and involves the hydrolysis of activated Val-AMP. The other activity is designated 'posttransfer' editing and involves deacylation of mischarged Val-tRNA(Ile). The protein is Isoleucine--tRNA ligase of Bordetella bronchiseptica (strain ATCC BAA-588 / NCTC 13252 / RB50) (Alcaligenes bronchisepticus).